The primary structure comprises 812 residues: ATP-dependent DNA helicase PIF3 (812 aa).

247–254 (GSAGTGKT) serves as a coordination point for ATP. The DNA-binding element occupies 741-761 (HLVYVACSRVRSMDQLIVRNV).

The protein belongs to the helicase family. PIF1 subfamily. As to quaternary structure, monomer. Requires Mg(2+) as cofactor.

It localises to the cytoplasm. It catalyses the reaction Couples ATP hydrolysis with the unwinding of duplex DNA at the replication fork by translocating in the 5'-3' direction. This creates two antiparallel DNA single strands (ssDNA). The leading ssDNA polymer is the template for DNA polymerase III holoenzyme which synthesizes a continuous strand.. It carries out the reaction ATP + H2O = ADP + phosphate + H(+). Functionally, DNA-dependent ATPase and 5'-3' DNA helicase required for the maintenance of genome stability. This is ATP-dependent DNA helicase PIF3 from Trypanosoma brucei brucei (strain 927/4 GUTat10.1).